A 453-amino-acid chain; its full sequence is Tryptophan biosynthesis protein TrpCF (453 aa).

The interval 1 to 257 is indole-3-glycerol phosphate synthase; it reads MMQTVLAKIV…AAVRRVLLGE (257 aa). Residues 258–453 are N-(5'-phosphoribosyl)anthranilate isomerase; the sequence is NKVCGLTRGQ…ASVFQTLRAY (196 aa).

It in the N-terminal section; belongs to the TrpC family. This sequence in the C-terminal section; belongs to the TrpF family. In terms of assembly, monomer.

It carries out the reaction N-(5-phospho-beta-D-ribosyl)anthranilate = 1-(2-carboxyphenylamino)-1-deoxy-D-ribulose 5-phosphate. It catalyses the reaction 1-(2-carboxyphenylamino)-1-deoxy-D-ribulose 5-phosphate + H(+) = (1S,2R)-1-C-(indol-3-yl)glycerol 3-phosphate + CO2 + H2O. The protein operates within amino-acid biosynthesis; L-tryptophan biosynthesis; L-tryptophan from chorismate: step 3/5. It participates in amino-acid biosynthesis; L-tryptophan biosynthesis; L-tryptophan from chorismate: step 4/5. Its function is as follows. Bifunctional enzyme that catalyzes two sequential steps of tryptophan biosynthetic pathway. The first reaction is catalyzed by the isomerase, coded by the TrpF domain; the second reaction is catalyzed by the synthase, coded by the TrpC domain. The protein is Tryptophan biosynthesis protein TrpCF (trpC) of Escherichia coli (strain K12).